We begin with the raw amino-acid sequence, 408 residues long: 1-deoxy-D-xylulose 5-phosphate reductoisomerase (408 aa).

Residues threonine 27, glycine 28, serine 29, isoleucine 30, alanine 53, arginine 54, asparagine 55, and asparagine 140 each coordinate NADPH. Lysine 141 contributes to the 1-deoxy-D-xylulose 5-phosphate binding site. An NADPH-binding site is contributed by glutamate 142. A Mn(2+)-binding site is contributed by aspartate 166. 1-deoxy-D-xylulose 5-phosphate is bound by residues serine 167, glutamate 168, serine 192, and histidine 215. Residue glutamate 168 participates in Mn(2+) binding. Glycine 221 contacts NADPH. 1-deoxy-D-xylulose 5-phosphate is bound by residues serine 228, asparagine 233, lysine 234, and glutamate 237. A Mn(2+)-binding site is contributed by glutamate 237.

Belongs to the DXR family. The cofactor is Mg(2+). Mn(2+) serves as cofactor.

It carries out the reaction 2-C-methyl-D-erythritol 4-phosphate + NADP(+) = 1-deoxy-D-xylulose 5-phosphate + NADPH + H(+). Its pathway is isoprenoid biosynthesis; isopentenyl diphosphate biosynthesis via DXP pathway; isopentenyl diphosphate from 1-deoxy-D-xylulose 5-phosphate: step 1/6. Its function is as follows. Catalyzes the NADPH-dependent rearrangement and reduction of 1-deoxy-D-xylulose-5-phosphate (DXP) to 2-C-methyl-D-erythritol 4-phosphate (MEP). The polypeptide is 1-deoxy-D-xylulose 5-phosphate reductoisomerase (Nitratidesulfovibrio vulgaris (strain ATCC 29579 / DSM 644 / CCUG 34227 / NCIMB 8303 / VKM B-1760 / Hildenborough) (Desulfovibrio vulgaris)).